Consider the following 312-residue polypeptide: Methionyl-tRNA formyltransferase (312 aa).

110–113 lines the (6S)-5,6,7,8-tetrahydrofolate pocket; that stretch reads SLLP.

It belongs to the Fmt family.

The enzyme catalyses L-methionyl-tRNA(fMet) + (6R)-10-formyltetrahydrofolate = N-formyl-L-methionyl-tRNA(fMet) + (6S)-5,6,7,8-tetrahydrofolate + H(+). Functionally, attaches a formyl group to the free amino group of methionyl-tRNA(fMet). The formyl group appears to play a dual role in the initiator identity of N-formylmethionyl-tRNA by promoting its recognition by IF2 and preventing the misappropriation of this tRNA by the elongation apparatus. The sequence is that of Methionyl-tRNA formyltransferase from Koribacter versatilis (strain Ellin345).